Here is a 608-residue protein sequence, read N- to C-terminus: Kelch-like protein 10 (608 aa).

The BTB domain occupies 39–106; the sequence is CDVVIKVNGF…AYTRTVPITP (68 aa). Kelch repeat units lie at residues 292–339, 340–386, 388–433, 434–480, 481–527, and 529–574; these read ILFA…YLKG, YVYI…VLGN, IYAM…TLYG, KVYI…AYGE, HVYA…VVDD, and LFVV…VVPG. S501 is modified (phosphoserine).

In terms of assembly, self-associates. Interacts with CUL3; indicative for the participation in an E3 ubiquitin ligase complex.

Its subcellular location is the cytoplasm. Its pathway is protein modification; protein ubiquitination. In terms of biological role, may be a substrate-specific adapter of a CUL3-based E3 ubiquitin-protein ligase complex which mediates the ubiquitination and subsequent proteasomal degradation of target proteins during spermatogenesis. The sequence is that of Kelch-like protein 10 (KLHL10) from Homo sapiens (Human).